The following is a 454-amino-acid chain: Tegument protein VP16 homolog (454 aa).

The protein belongs to the herpesviridae tegument protein VP16 protein family. In terms of assembly, associates with the VP16-induced complex; binding to host HCFC1 activates VP16 for association with the octamer motif-binding host protein POU2F1, to form a multiprotein-DNA complex responsible for activating transcription of the viral immediate early genes.

It localises to the virion tegument. The protein resides in the host nucleus. Transcriptional activator of immediate-early (IE) gene products (alpha genes). Acts as a key activator of lytic infection by initiating the lytic program through the assembly of the transcriptional regulatory VP16-induced complex composed of VP16 and two cellular factors, HCFC1 and POU2F1. VP16-induced complex represents a regulatory switch: when it is on, it promotes IE-gene expression and thus lytic infection, and when it is off, it limits IE-gene transcription favoring latent infection. Functionally, may play a role in the aggregation of tegument proteins around nucleocapsids during virus morphogenesis. This Equine herpesvirus 4 (strain 1942) (EHV-4) protein is Tegument protein VP16 homolog (12).